The chain runs to 795 residues: Phenylalanine--tRNA ligase beta subunit (795 aa).

In terms of domain architecture, tRNA-binding spans 39–148 (AGSFHGVVVG…ADAPIGTDIR (110 aa)). Residues 401 to 476 (PKRATITLRR…RVYGYNNIPD (76 aa)) form the B5 domain. Mg(2+) is bound by residues Asp-454, Asp-460, Glu-463, and Glu-464. The 94-residue stretch at 701–794 (SRFPANRRDI…LKERFQASLR (94 aa)) folds into the FDX-ACB domain.

It belongs to the phenylalanyl-tRNA synthetase beta subunit family. Type 1 subfamily. In terms of assembly, tetramer of two alpha and two beta subunits. It depends on Mg(2+) as a cofactor.

It localises to the cytoplasm. It catalyses the reaction tRNA(Phe) + L-phenylalanine + ATP = L-phenylalanyl-tRNA(Phe) + AMP + diphosphate + H(+). This is Phenylalanine--tRNA ligase beta subunit from Shigella flexneri.